The sequence spans 72 residues: uncharacterized protein (72 aa).

2 helical membrane-spanning segments follow: residues Trp-15–Ile-35 and Ile-50–Ile-70.

The protein localises to the host membrane. This is an uncharacterized protein from Spiroplasma melliferum (SpV1).